Here is a 55-residue protein sequence, read N- to C-terminus: COP9 signalosome complex subunit 3 (55 aa).

Residues 1–52 (KSIQGLSASPGDLSALHGKEAEMHVLQMIQDGQIHALINQKDGMVRFLEDPE) form the PCI domain.

It belongs to the CSN3 family. In terms of assembly, component of the CSN complex, probably composed of CSN1, CSN2, CSN3, CSN4, CSN5 (CSN5A or CSN5B), CSN6 (CSN6A or CSN6B), CSN7 and CSN8.

Its subcellular location is the cytoplasm. The protein resides in the nucleus. Component of the COP9 signalosome complex (CSN), a complex involved in various cellular and developmental processes such as photomorphogenesis and auxin and jasmonate responses. The CSN complex is an essential regulator of the ubiquitin (Ubl) conjugation pathway by mediating the deneddylation of the cullin subunits of SCF-type E3 ligase complexes, leading to decrease the Ubl ligase activity of SCF. It is involved in repression of photomorphogenesis in darkness by regulating the activity of COP1-containing Ubl ligase complexes. In Brassica oleracea (Wild cabbage), this protein is COP9 signalosome complex subunit 3 (CSN3).